A 397-amino-acid chain; its full sequence is F-box protein At5g25290 (397 aa).

An F-box domain is found at 11-56 (VTLWSEIPMDILRSVFERLSFVDLHRAKIVCSHWYSCSKQSFLRKT).

The sequence is that of F-box protein At5g25290 from Arabidopsis thaliana (Mouse-ear cress).